The sequence spans 843 residues: MPLSYQHFRKMLLLDEEAGPLEEELPRLADEGLNRRVAEDLNLGDLNVSIPWTHKVGNFTGLYSSTVPCFNPQWQTPSFPSIHLQEDIVDRCKQFVGPLTVNENRRLKLIMPARFYPNVTKYLPLDKGIKPYYPEYIVDHYFQTRHYLHTLWKAGILYKRESTRSASFCGSPYSWEQDLQHGRLVFQTSKRHGDKSFCPQSPGILPRSSVGPCIQSQLRKSRLGPQPAQGQLAGRQQGGSGSIRARVHPSPWGTVGVEPSGSGPTHNCASSSSSCLHQSAVRKAAYSLLSTSKGHSSSGHAVELHNFPPNSSRFQSQGPVPSCWWLQFRNSEPCSEYCLSHIVNLIEDWGPCTEHGEHRIRTPRTPARVTGGVFLVDKNPHNTTESRLVVDFSQFSRGNTRVSWPKFAVPNLQSLTNLLSSNLSWLSLDVSAAFYHLPLHPAAMPHLLVGSSGLSRYVARLSSHSRINNNQHGTMQNLHNSCSRNLYVSLMLLYKTYGRKLHLYSHPIILGFRKIPMGVGLSPFLLAQFTSAICSVVRRAFPHCLAFSYMDDVVLGAKSVQHLEALYAAVTNFLLSLGIHLNPHKTKRWGYSLNFMGYVIGSWGTLPQEHIVQKIKMCFRKLPVNRPIDWKVCQRIVGLLGFAAPFTQCGYPALMPLYACIQAKQAFTFSPTYKAFLSKQYLNLYPVARQRPGLCQVFRDATPTGWGLAIGHQRMRGTFVSPLPIHTAELLAACFARSRSGAKLIGTHNSVVLSRKYTSFPWLLGCAANWILRGTSFVYVPSALNPADDPSRGRLGLYRPLLRLPYQPTTGRTSLYADSPSVPSHLPDRVHFASPLHVAWRPP.

Residues 1-177 (MPLSYQHFRK…FCGSPYSWEQ (177 aa)) are terminal protein domain (TP). The interval 178–346 (DLQHGRLVFQ…YCLSHIVNLI (169 aa)) is spacer. The disordered stretch occupies residues 219 to 269 (RKSRLGPQPAQGQLAGRQQGGSGSIRARVHPSPWGTVGVEPSGSGPTHNCA). A compositionally biased stretch (low complexity) spans 223–235 (LGPQPAQGQLAGR). Positions 347 to 690 (EDWGPCTEHG…YLNLYPVARQ (344 aa)) are polymerase/reverse transcriptase domain (RT). The Reverse transcriptase domain maps to 357 to 600 (EHRIRTPRTP…YSLNFMGYVI (244 aa)). Mg(2+) is bound by residues Asp-429, Asp-551, and Asp-552.

It belongs to the hepadnaviridae P protein family.

It carries out the reaction DNA(n) + a 2'-deoxyribonucleoside 5'-triphosphate = DNA(n+1) + diphosphate. The enzyme catalyses Endonucleolytic cleavage to 5'-phosphomonoester.. Activated by host HSP70 and HSP40 in vitro to be able to bind the epsilon loop of the pgRNA. Because deletion of the RNase H region renders the protein partly chaperone-independent, the chaperones may be needed indirectly to relieve occlusion of the RNA-binding site by this domain. Inhibited by several reverse-transcriptase inhibitors: Lamivudine, Adefovir and Entecavir. Multifunctional enzyme that converts the viral RNA genome into dsDNA in viral cytoplasmic capsids. This enzyme displays a DNA polymerase activity that can copy either DNA or RNA templates, and a ribonuclease H (RNase H) activity that cleaves the RNA strand of RNA-DNA heteroduplexes in a partially processive 3'- to 5'-endonucleasic mode. Neo-synthesized pregenomic RNA (pgRNA) are encapsidated together with the P protein, and reverse-transcribed inside the nucleocapsid. Initiation of reverse-transcription occurs first by binding the epsilon loop on the pgRNA genome, and is initiated by protein priming, thereby the 5'-end of (-)DNA is covalently linked to P protein. Partial (+)DNA is synthesized from the (-)DNA template and generates the relaxed circular DNA (RC-DNA) genome. After budding and infection, the RC-DNA migrates in the nucleus, and is converted into a plasmid-like covalently closed circular DNA (cccDNA). The activity of P protein does not seem to be necessary for cccDNA generation, and is presumably released from (+)DNA by host nuclear DNA repair machinery. The chain is Protein P from Hepatitis B virus genotype B2 subtype adw (isolate China/patient4/1996) (HBV-B).